Reading from the N-terminus, the 387-residue chain is 3-ketoacyl-CoA thiolase (387 aa).

Residue cysteine 91 is the Acyl-thioester intermediate of the active site. Residues histidine 343 and cysteine 373 each act as proton acceptor in the active site.

The protein belongs to the thiolase-like superfamily. Thiolase family. Heterotetramer of two alpha chains (FadB) and two beta chains (FadA).

It is found in the cytoplasm. It carries out the reaction an acyl-CoA + acetyl-CoA = a 3-oxoacyl-CoA + CoA. Its pathway is lipid metabolism; fatty acid beta-oxidation. Its function is as follows. Catalyzes the final step of fatty acid oxidation in which acetyl-CoA is released and the CoA ester of a fatty acid two carbons shorter is formed. This chain is 3-ketoacyl-CoA thiolase, found in Photobacterium profundum (strain SS9).